The following is a 627-amino-acid chain: MERPEPPPGTAAGQEEQELRERAFFSWAEFSRFFDAWCQQRLALFFVKSSMHLARCRWASAPPLYTLIDVLKYSYVRLVCKDVRAPSRPAVGPPQPGCPAFIIVKLSPLRDRLVVTECQLTHSHPACPLEFAYYFRPGHLLANACLPVRTTNKISKQFVAPADVRRLLSYCKGRDHGVLDALHVLEGLFRTDPEAKVKLVFVEDQAVVETVFFLTSRTRALLRRFPRMLLVDRLPGLQGALDLLAVLCVDGSGRARQAACCVARPGTPSLLRFALASLLQSAPDVKGRVRCLTAGPEVAAQLPAVRQLLPCARVQICRAQGLETLFSKAQELGGAGREDPGLWSRLCRLAGASSPAAYDEALAELHAHGPAAFVDYFERNWEPRRDMWVRFRAFEAARDLDACALVRGHRRRLLRRLSPSRGVAQCLRDLVAMQWADAAGEAVPEGPDGGGPWLEDEPGRGAQGENERVRGLETGDWGGAPKEGSIWRGAQMEKEWARALETRDWGGAQFEGEKGRALQIRDWRGGRLENQKPRGLEGGVLRGSKLEKGHLRGPEIRDWRGPQLEGEKDWGLEGYVWRGSQLEDQALRGLEGYTWRVAQLEDRRSTTDLRGTQFDYERGKGESTEDR.

Disordered regions lie at residues 441–466 (EAVP…QGEN) and 608–627 (DLRG…TEDR). Residues 615 to 627 (DYERGKGESTEDR) show a composition bias toward basic and acidic residues.

This is an uncharacterized protein from Homo sapiens (Human).